The following is a 208-amino-acid chain: Probable adenylyl-sulfate kinase (208 aa).

38–45 (GLSGSGKS) lines the ATP pocket. The active-site Phosphoserine intermediate is Ser112.

This sequence belongs to the APS kinase family.

The enzyme catalyses adenosine 5'-phosphosulfate + ATP = 3'-phosphoadenylyl sulfate + ADP + H(+). It participates in sulfur metabolism; hydrogen sulfide biosynthesis; sulfite from sulfate: step 2/3. Its function is as follows. Catalyzes the synthesis of activated sulfate. The chain is Probable adenylyl-sulfate kinase from Halalkalibacterium halodurans (strain ATCC BAA-125 / DSM 18197 / FERM 7344 / JCM 9153 / C-125) (Bacillus halodurans).